The sequence spans 72 residues: MSKAVIVIPARYGSSRLPGKPLLDIVGKPMIQHVYERALQVAGVAEVWVATDDQRVEKAVQAFGGKAIMTRN.

It belongs to the KdsB family. Homodimer.

The protein resides in the cytoplasm. It catalyses the reaction 3-deoxy-alpha-D-manno-oct-2-ulosonate + CTP = CMP-3-deoxy-beta-D-manno-octulosonate + diphosphate. Its pathway is nucleotide-sugar biosynthesis; CMP-3-deoxy-D-manno-octulosonate biosynthesis; CMP-3-deoxy-D-manno-octulosonate from 3-deoxy-D-manno-octulosonate and CTP: step 1/1. The protein operates within bacterial outer membrane biogenesis; lipopolysaccharide biosynthesis. Activates KDO (a required 8-carbon sugar) for incorporation into bacterial lipopolysaccharide in Gram-negative bacteria. In Escherichia coli, this protein is 3-deoxy-manno-octulosonate cytidylyltransferase (kpsU).